Here is a 318-residue protein sequence, read N- to C-terminus: Pseudouridine-5'-phosphate glycosidase 1 (318 aa).

The Proton donor role is filled by Glu-29. Substrate-binding residues include Lys-90 and Val-110. Asp-142 is a Mn(2+) binding site. 144–146 (SAD) lines the substrate pocket. Lys-163 acts as the Nucleophile in catalysis.

This sequence belongs to the pseudouridine-5'-phosphate glycosidase family. In terms of assembly, homotrimer. Requires Mn(2+) as cofactor.

It carries out the reaction D-ribose 5-phosphate + uracil = psi-UMP + H2O. In terms of biological role, catalyzes the reversible cleavage of pseudouridine 5'-phosphate (PsiMP) to ribose 5-phosphate and uracil. Functions biologically in the cleavage direction, as part of a pseudouridine degradation pathway. This Photorhabdus laumondii subsp. laumondii (strain DSM 15139 / CIP 105565 / TT01) (Photorhabdus luminescens subsp. laumondii) protein is Pseudouridine-5'-phosphate glycosidase 1.